A 320-amino-acid polypeptide reads, in one-letter code: ATP-dependent 6-phosphofructokinase (320 aa).

Gly-12 is a binding site for ATP. Residues 22 to 26 (RGVVR) and 55 to 60 (RYSVSD) contribute to the ADP site. Residues 73 to 74 (RF) and 103 to 106 (GDGS) contribute to the ATP site. Residue Asp-104 participates in Mg(2+) binding. Residue 126-128 (TID) participates in substrate binding. The active-site Proton acceptor is Asp-128. Arg-155 is an ADP binding site. Residues Arg-163 and 170 to 172 (MGR) contribute to the substrate site. Residues 186–188 (GCE), Lys-212, and 214–216 (KKH) each bind ADP. Substrate contacts are provided by residues Glu-223, Arg-244, and 250–253 (HIQR).

It belongs to the phosphofructokinase type A (PFKA) family. ATP-dependent PFK group I subfamily. Prokaryotic clade 'B1' sub-subfamily. As to quaternary structure, homotetramer. Mg(2+) serves as cofactor.

The protein resides in the cytoplasm. The catalysed reaction is beta-D-fructose 6-phosphate + ATP = beta-D-fructose 1,6-bisphosphate + ADP + H(+). The protein operates within carbohydrate degradation; glycolysis; D-glyceraldehyde 3-phosphate and glycerone phosphate from D-glucose: step 3/4. Its activity is regulated as follows. Allosterically activated by ADP and other diphosphonucleosides, and allosterically inhibited by phosphoenolpyruvate. Functionally, catalyzes the phosphorylation of D-fructose 6-phosphate to fructose 1,6-bisphosphate by ATP, the first committing step of glycolysis. The chain is ATP-dependent 6-phosphofructokinase from Salmonella agona (strain SL483).